The primary structure comprises 198 residues: Carnitine operon protein CaiE (198 aa).

Residues 179-198 (VEENRPRLKGTTDVKPKSAQ) form a disordered region. Residues 180 to 198 (EENRPRLKGTTDVKPKSAQ) are compositionally biased toward basic and acidic residues.

This sequence belongs to the transferase hexapeptide repeat family.

It participates in amine and polyamine metabolism; carnitine metabolism. Functionally, overproduction of CaiE stimulates the activity of CaiB and CaiD. This chain is Carnitine operon protein CaiE, found in Salmonella agona (strain SL483).